We begin with the raw amino-acid sequence, 97 residues long: MANQKVAPLADRVVVKPLEEAEQMRGGLYIPDTAKEKPQQGTVVAVGPGRFEKETRVPMDVKVGDKILYGKYSGTEVTIEGEALLILRESDVLAVIN.

Belongs to the GroES chaperonin family. Heptamer of 7 subunits arranged in a ring. Interacts with the chaperonin GroEL.

Its subcellular location is the cytoplasm. Functionally, together with the chaperonin GroEL, plays an essential role in assisting protein folding. The GroEL-GroES system forms a nano-cage that allows encapsulation of the non-native substrate proteins and provides a physical environment optimized to promote and accelerate protein folding. GroES binds to the apical surface of the GroEL ring, thereby capping the opening of the GroEL channel. The sequence is that of Co-chaperonin GroES from Gemmatimonas aurantiaca (strain DSM 14586 / JCM 11422 / NBRC 100505 / T-27).